We begin with the raw amino-acid sequence, 125 residues long: Ixonnexin (125 aa).

A signal peptide spans 1–21; sequence MGLTGTTLVLVCVAFFGSAAA. N26 carries N-linked (GlcNAc...) asparagine glycosylation. The disordered stretch occupies residues 81-125; it reads TSSGGPDDTGDNTPPPTEKPKQKKKKPKKTKKPKRKSKKDQKENF. A compositionally biased stretch (basic residues) spans 101-119; it reads KQKKKKPKKTKKPKRKSKK.

Belongs to the salp14 family. Homodimer. Interacts with host PLG. Interacts with host PLAT. Saliva (at protein level).

The protein resides in the secreted. Functionally, salivary protein that promotes host fibrinolysis via accelerating host plasmin generation from plasminogen (PLG) initiated by tPA/tissue-type plasminogen activator (PLAT). Does not affect urokinase (PLAU)-mediated fibrinolysis in the host. Enhances amidolytic activity of host coagulation factor Xa (F10). This Ixodes scapularis (Black-legged tick) protein is Ixonnexin.